The following is a 149-amino-acid chain: MSNTLSFKTYSAKPGEVVRKWYIVDAEGKVLGRLASEIAKVLRGKHKAQFTPHIDTGDFVIVTNAEKIGLSGKKMDQKTYFSHSNYPGGVRIDNVKDVLQKKPEQVIEKAVWGMLPHNNLGRQLFKKLKVYKGTEHPHAAQCPVEMNVN.

The protein belongs to the universal ribosomal protein uL13 family. Part of the 50S ribosomal subunit.

Functionally, this protein is one of the early assembly proteins of the 50S ribosomal subunit, although it is not seen to bind rRNA by itself. It is important during the early stages of 50S assembly. The chain is Large ribosomal subunit protein uL13 from Prosthecochloris aestuarii (strain DSM 271 / SK 413).